A 118-amino-acid polypeptide reads, in one-letter code: Small ribosomal subunit protein uS13 (118 aa).

The interval S94 to K118 is disordered.

The protein belongs to the universal ribosomal protein uS13 family. As to quaternary structure, part of the 30S ribosomal subunit. Forms a loose heterodimer with protein S19. Forms two bridges to the 50S subunit in the 70S ribosome.

Its function is as follows. Located at the top of the head of the 30S subunit, it contacts several helices of the 16S rRNA. In the 70S ribosome it contacts the 23S rRNA (bridge B1a) and protein L5 of the 50S subunit (bridge B1b), connecting the 2 subunits; these bridges are implicated in subunit movement. Contacts the tRNAs in the A and P-sites. The polypeptide is Small ribosomal subunit protein uS13 (Haemophilus influenzae (strain 86-028NP)).